Reading from the N-terminus, the 316-residue chain is HPr kinase/phosphorylase (316 aa).

Active-site residues include His-146 and Lys-167. 161 to 168 (GESGLGKS) contacts ATP. Ser-168 contacts Mg(2+). The active-site Proton acceptor; for phosphorylation activity. Proton donor; for dephosphorylation activity is the Asp-185. Residues 209 to 218 (LEVRGIGLLD) form an important for the catalytic mechanism of both phosphorylation and dephosphorylation region. A Mg(2+)-binding site is contributed by Glu-210. Arg-252 is a catalytic residue. An important for the catalytic mechanism of dephosphorylation region spans residues 273–278 (QVEAGR).

This sequence belongs to the HPrK/P family. In terms of assembly, homohexamer. Mg(2+) is required as a cofactor.

The enzyme catalyses [HPr protein]-L-serine + ATP = [HPr protein]-O-phospho-L-serine + ADP + H(+). The catalysed reaction is [HPr protein]-O-phospho-L-serine + phosphate + H(+) = [HPr protein]-L-serine + diphosphate. Functionally, catalyzes the ATP- as well as the pyrophosphate-dependent phosphorylation of a specific serine residue in HPr, a phosphocarrier protein of the phosphoenolpyruvate-dependent sugar phosphotransferase system (PTS). HprK/P also catalyzes the pyrophosphate-producing, inorganic phosphate-dependent dephosphorylation (phosphorolysis) of seryl-phosphorylated HPr (P-Ser-HPr). This chain is HPr kinase/phosphorylase, found in Polaromonas naphthalenivorans (strain CJ2).